Reading from the N-terminus, the 310-residue chain is Glutaminase (310 aa).

Residues Ser66, Asn117, Glu161, Asn168, Tyr192, Tyr244, and Val262 each coordinate substrate.

It belongs to the glutaminase family. As to quaternary structure, homotetramer.

It carries out the reaction L-glutamine + H2O = L-glutamate + NH4(+). This Desulfovibrio desulfuricans (strain ATCC 27774 / DSM 6949 / MB) protein is Glutaminase.